Here is a 186-residue protein sequence, read N- to C-terminus: Elongation factor P (186 aa).

The protein belongs to the elongation factor P family.

The protein resides in the cytoplasm. Its pathway is protein biosynthesis; polypeptide chain elongation. Its function is as follows. Involved in peptide bond synthesis. Stimulates efficient translation and peptide-bond synthesis on native or reconstituted 70S ribosomes in vitro. Probably functions indirectly by altering the affinity of the ribosome for aminoacyl-tRNA, thus increasing their reactivity as acceptors for peptidyl transferase. The polypeptide is Elongation factor P (Elusimicrobium minutum (strain Pei191)).